The primary structure comprises 217 residues: Nascent polypeptide-associated complex subunit alpha-like protein 2 (217 aa).

The interval Met1 to Leu81 is disordered. The segment covering Pro37–Ala60 has biased composition (acidic residues). Residues Ser70 to Leu135 form the NAC-A/B domain. The 38-residue stretch at Val178–Leu215 folds into the UBA domain.

The protein belongs to the NAC-alpha family.

May promote appropriate targeting of ribosome-nascent polypeptide complexes. The protein is Nascent polypeptide-associated complex subunit alpha-like protein 2 of Arabidopsis thaliana (Mouse-ear cress).